The chain runs to 368 residues: Ferrochelatase (368 aa).

Fe cation contacts are provided by His-209 and Glu-290. Residues 347-368 form a disordered region; it reads REEQEQQAHISREEARRLGADQ.

This sequence belongs to the ferrochelatase family.

It localises to the cytoplasm. The catalysed reaction is heme b + 2 H(+) = protoporphyrin IX + Fe(2+). It functions in the pathway porphyrin-containing compound metabolism; protoheme biosynthesis; protoheme from protoporphyrin-IX: step 1/1. Functionally, catalyzes the ferrous insertion into protoporphyrin IX. In Janthinobacterium sp. (strain Marseille) (Minibacterium massiliensis), this protein is Ferrochelatase.